Reading from the N-terminus, the 141-residue chain is VLSPADKSNVKAAWGKVGGHAGDYGAEALERMFLSFPTTKTYFPHFDLSHGSAQVKGHGKKVADALTVAVAHVDDMPNALSALSDLHAHKLRVDPVNFKLLSHCLLVTLAAHLPADFTPAVHASLDKFLASVSTVLTSKYR.

Residues 1–141 enclose the Globin domain; sequence VLSPADKSNV…VSTVLTSKYR (141 aa). Ser3 carries the post-translational modification Phosphoserine. 2 positions are modified to N6-succinyllysine: Lys7 and Lys11. Lys16 is subject to N6-acetyllysine; alternate. N6-succinyllysine; alternate is present on Lys16. Tyr24 carries the phosphotyrosine modification. At Ser35 the chain carries Phosphoserine. Lys40 is subject to N6-succinyllysine. A Phosphoserine modification is found at Ser49. His58 contacts O2. A heme b-binding site is contributed by His87. Phosphoserine is present on Ser102. The residue at position 108 (Thr108) is a Phosphothreonine. Residues Ser124 and Ser131 each carry the phosphoserine modification. Thr134 and Thr137 each carry phosphothreonine. Phosphoserine is present on Ser138.

It belongs to the globin family. As to quaternary structure, heterotetramer of two alpha chains and two beta chains. As to expression, red blood cells.

Its function is as follows. Involved in oxygen transport from the lung to the various peripheral tissues. Functionally, hemopressin acts as an antagonist peptide of the cannabinoid receptor CNR1. Hemopressin-binding efficiently blocks cannabinoid receptor CNR1 and subsequent signaling. The protein is Hemoglobin subunit alpha (HBA) of Leontocebus fuscicollis (Brown-mantled tamarin).